Consider the following 842-residue polypeptide: Synaptonemal complex protein 2-like (842 aa).

Disordered regions lie at residues 451–473 (GSLEITNTEERSLENSKQDEPEQ), 505–560 (FARD…KQRV), 619–666 (STQK…SSLE), and 715–738 (EDAPGSPVVTDTSTPSQEDMPGSV). Basic and acidic residues-rich tracts occupy residues 458–470 (TEERSLENSKQDE) and 505–525 (FARDREQDRRMPFNDRNHDLL). The span at 543 to 559 (NHKRKSLRTYSQRKKQR) shows a compositional bias: basic residues. Basic and acidic residues-rich tracts occupy residues 624 to 633 (GLEKPERRGS) and 643 to 655 (RVTDGLHWREPRS).

It belongs to the SYCP2 family. Specifically expressed in oocytes.

It is found in the nucleus. It localises to the chromosome. Its subcellular location is the centromere. Functionally, oocyte-specific protein that localizes to centromeres at the dictyate stage and regulates the survival of primordial oocytes. The chain is Synaptonemal complex protein 2-like from Mus musculus (Mouse).